The chain runs to 1117 residues: Cytospin-A (1117 aa).

Disordered regions lie at residues 1 to 176, 293 to 323, and 358 to 390; these read MKKA…NQIS, SLSP…GSVE, and SSDD…NASE. Low complexity-rich tracts occupy residues 45-72 and 99-119; these read TTAS…TNGV and KIST…NKES. 2 stretches are compositionally biased toward basic and acidic residues: residues 120-131 and 158-171; these read SSTRERLRERTR and TTTE…KSKS. Residues 168–280 are a coiled coil; it reads KSKSDNQISD…LNALGFSLEQ (113 aa). Residues 293 to 303 are compositionally biased toward polar residues; the sequence is SLSPEITPGNQ. Over residues 358–377 the composition is skewed to low complexity; it reads SSDDALDAPSSSESEGIPSI. A phosphoserine mark is found at serine 384, serine 385, and serine 389. Coiled-coil stretches lie at residues 394–449 and 487–807; these read ACLT…MESL and RYME…RGRV. Positions 852–878 are disordered; that stretch reads SQVPNPTAAAIPRTPLSPSPMKTPPAA. Serine 868, serine 881, and serine 887 each carry phosphoserine. Residues 920-997 are disordered; the sequence is TSSTSRPASL…PTTRSRIREE (78 aa). The segment covering 946-956 has biased composition (basic and acidic residues); the sequence is RSSEEMKRDIS. Low complexity predominate over residues 971–990; the sequence is TTSPQLSLSSSPTASVTPTT. The 106-residue stretch at 1011 to 1116 folds into the Calponin-homology (CH) domain; that stretch reads GSKRNALLKW…YVTAIYKYFE (106 aa).

The protein belongs to the cytospin-A family. As to quaternary structure, may interact with both microtubules and actin cytoskeleton.

It localises to the cytoplasm. Its subcellular location is the cytoskeleton. The protein localises to the spindle. The protein resides in the cell junction. It is found in the gap junction. Its function is as follows. Involved in cytokinesis and spindle organization. May play a role in actin cytoskeleton organization and microtubule stabilization and hence required for proper cell adhesion and migration. This Canis lupus familiaris (Dog) protein is Cytospin-A (SPECC1L).